Consider the following 333-residue polypeptide: Succinylglutamate desuccinylase (333 aa).

3 residues coordinate Zn(2+): His56, Glu59, and His149. The active site involves Glu214.

The protein belongs to the AspA/AstE family. Succinylglutamate desuccinylase subfamily. Zn(2+) is required as a cofactor.

It catalyses the reaction N-succinyl-L-glutamate + H2O = L-glutamate + succinate. It functions in the pathway amino-acid degradation; L-arginine degradation via AST pathway; L-glutamate and succinate from L-arginine: step 5/5. Functionally, transforms N(2)-succinylglutamate into succinate and glutamate. This is Succinylglutamate desuccinylase from Chromobacterium violaceum (strain ATCC 12472 / DSM 30191 / JCM 1249 / CCUG 213 / NBRC 12614 / NCIMB 9131 / NCTC 9757 / MK).